Consider the following 58-residue polypeptide: Preprotein translocase subunit SecG (58 aa).

At 1 to 32 (MARKRRKGGEGLVTAIGLVRFYEEVEEKIKVP) the chain is on the cytoplasmic side. A helical membrane pass occupies residues 33–54 (PEAVIGAAFALSIMTIALDLLL). The Extracellular segment spans residues 55-58 (KAAR).

Belongs to the SEC61-beta family. In terms of assembly, component of the protein translocase complex. Heterotrimer consisting of alpha (SecY), beta (SecG) and gamma (SecE) subunits. Can form oligomers of the heterotrimer.

It localises to the cell membrane. Involved in protein export. The function of the beta subunit is unknown, but it may be involved in stabilization of the trimeric complex. This chain is Preprotein translocase subunit SecG, found in Ignicoccus hospitalis (strain KIN4/I / DSM 18386 / JCM 14125).